The primary structure comprises 137 residues: NADPH-dependent 7-cyano-7-deazaguanine reductase (137 aa).

The active-site Thioimide intermediate is the Cys-45. The Proton donor role is filled by Asp-52. Residues 68-70 (VEL) and 87-88 (QE) contribute to the substrate site.

This sequence belongs to the GTP cyclohydrolase I family. QueF type 1 subfamily.

It is found in the cytoplasm. It catalyses the reaction 7-aminomethyl-7-carbaguanine + 2 NADP(+) = 7-cyano-7-deazaguanine + 2 NADPH + 3 H(+). It participates in tRNA modification; tRNA-queuosine biosynthesis. Catalyzes the NADPH-dependent reduction of 7-cyano-7-deazaguanine (preQ0) to 7-aminomethyl-7-deazaguanine (preQ1). The protein is NADPH-dependent 7-cyano-7-deazaguanine reductase of Thermotoga petrophila (strain ATCC BAA-488 / DSM 13995 / JCM 10881 / RKU-1).